We begin with the raw amino-acid sequence, 507 residues long: ATP synthase subunit alpha, chloroplastic (507 aa).

Residue 170–177 coordinates ATP; sequence GDRQTGKT.

It belongs to the ATPase alpha/beta chains family. As to quaternary structure, F-type ATPases have 2 components, CF(1) - the catalytic core - and CF(0) - the membrane proton channel. CF(1) has five subunits: alpha(3), beta(3), gamma(1), delta(1), epsilon(1). CF(0) has four main subunits: a, b, b' and c.

The protein resides in the plastid. Its subcellular location is the chloroplast thylakoid membrane. It catalyses the reaction ATP + H2O + 4 H(+)(in) = ADP + phosphate + 5 H(+)(out). Functionally, produces ATP from ADP in the presence of a proton gradient across the membrane. The alpha chain is a regulatory subunit. The chain is ATP synthase subunit alpha, chloroplastic from Nymphaea alba (White water-lily).